A 293-amino-acid polypeptide reads, in one-letter code: Protease HtpX homolog (293 aa).

2 helical membrane passes run 4-24 and 40-60; these read VILF…TLRI and ALLM…LLIS. Histidine 146 serves as a coordination point for Zn(2+). Residue glutamate 147 is part of the active site. Zn(2+) is bound at residue histidine 150. Transmembrane regions (helical) follow at residues 161 to 181 and 198 to 218; these read LIQG…GYFV and VTVI…VAWF. Glutamate 223 contacts Zn(2+).

The protein belongs to the peptidase M48B family. Zn(2+) is required as a cofactor.

Its subcellular location is the cell inner membrane. This chain is Protease HtpX homolog, found in Bordetella avium (strain 197N).